The chain runs to 56 residues: Prokaryotic ubiquitin-like protein UBact (56 aa).

Residues 1–28 are compositionally biased toward basic and acidic residues; it reads MPQDQQRKKQFDPNPNRDDSQRKTPVDK. The tract at residues 1–33 is disordered; it reads MPQDQQRKKQFDPNPNRDDSQRKTPVDKEIDDI. Gln56 carries the post-translational modification Deamidated glutamine. Gln56 is covalently cross-linked (Isoglutamyl lysine isopeptide (Gln-Lys) (interchain with K-? in acceptor proteins)).

Belongs to the ubiquitin-like protein UBact family. In terms of processing, may be modified by deamidation of its C-terminal glutamine to glutamate by the adjacently encoded deamidase. This could be a prerequisite to the subsequent conjugation, as shown in the other prokaryotic ubiquitin-like protein Pup.

Functionally, may function as a protein modifier covalently attached to lysine residues of substrate proteins. This may serve to target the modified proteins for degradation by proteasomes. This Yanofskybacteria sp. (strain GW2011_GWA1_39_13) protein is Prokaryotic ubiquitin-like protein UBact.